A 368-amino-acid chain; its full sequence is Histidinol dehydrogenase (368 aa).

Residues Thr197, Gln218, and His221 each contribute to the substrate site. 2 residues coordinate Zn(2+): Gln218 and His221. Active-site proton acceptor residues include Glu276 and His277. Substrate-binding residues include His277, Asp306, Glu358, and His363. Residue Asp306 coordinates Zn(2+). His363 lines the Zn(2+) pocket.

Belongs to the histidinol dehydrogenase family. It depends on Zn(2+) as a cofactor.

The catalysed reaction is L-histidinol + 2 NAD(+) + H2O = L-histidine + 2 NADH + 3 H(+). It functions in the pathway amino-acid biosynthesis; L-histidine biosynthesis; L-histidine from 5-phospho-alpha-D-ribose 1-diphosphate: step 9/9. Functionally, catalyzes the sequential NAD-dependent oxidations of L-histidinol to L-histidinaldehyde and then to L-histidine. This is Histidinol dehydrogenase from Pyrobaculum aerophilum (strain ATCC 51768 / DSM 7523 / JCM 9630 / CIP 104966 / NBRC 100827 / IM2).